We begin with the raw amino-acid sequence, 109 residues long: Cytochrome c-550 (109 aa).

Heme c contacts are provided by Cys13, Cys16, His17, and Met79.

In terms of processing, binds 1 heme c group covalently per subunit.

This Nitrobacter winogradskyi (Nitrobacter agilis) protein is Cytochrome c-550.